The primary structure comprises 173 residues: Probable chemoreceptor glutamine deamidase CheD (173 aa).

It belongs to the CheD family.

It carries out the reaction L-glutaminyl-[protein] + H2O = L-glutamyl-[protein] + NH4(+). Its function is as follows. Probably deamidates glutamine residues to glutamate on methyl-accepting chemotaxis receptors (MCPs), playing an important role in chemotaxis. The polypeptide is Probable chemoreceptor glutamine deamidase CheD (Haloarcula marismortui (strain ATCC 43049 / DSM 3752 / JCM 8966 / VKM B-1809) (Halobacterium marismortui)).